The sequence spans 121 residues: NADH-quinone oxidoreductase subunit A (121 aa).

Helical transmembrane passes span 8–28 (YLPI…TIIG), 65–85 (LVAI…PWAI), and 93–113 (QGMI…FYII).

This sequence belongs to the complex I subunit 3 family. NDH-1 is composed of 14 different subunits. Subunits NuoA, H, J, K, L, M, N constitute the membrane sector of the complex.

The protein resides in the cell inner membrane. The enzyme catalyses a quinone + NADH + 5 H(+)(in) = a quinol + NAD(+) + 4 H(+)(out). Functionally, NDH-1 shuttles electrons from NADH, via FMN and iron-sulfur (Fe-S) centers, to quinones in the respiratory chain. The immediate electron acceptor for the enzyme in this species is believed to be a menaquinone. Couples the redox reaction to proton translocation (for every two electrons transferred, four hydrogen ions are translocated across the cytoplasmic membrane), and thus conserves the redox energy in a proton gradient. This chain is NADH-quinone oxidoreductase subunit A, found in Flavobacterium psychrophilum (strain ATCC 49511 / DSM 21280 / CIP 103535 / JIP02/86).